A 120-amino-acid polypeptide reads, in one-letter code: Large ribosomal subunit protein uL18 (120 aa).

Belongs to the universal ribosomal protein uL18 family. As to quaternary structure, part of the 50S ribosomal subunit; part of the 5S rRNA/L5/L18/L25 subcomplex. Contacts the 5S and 23S rRNAs.

Its function is as follows. This is one of the proteins that bind and probably mediate the attachment of the 5S RNA into the large ribosomal subunit, where it forms part of the central protuberance. In Staphylococcus epidermidis (strain ATCC 35984 / DSM 28319 / BCRC 17069 / CCUG 31568 / BM 3577 / RP62A), this protein is Large ribosomal subunit protein uL18.